The following is a 531-amino-acid chain: Pyruvate kinase (531 aa).

Arg-86 serves as a coordination point for substrate. K(+) contacts are provided by Asn-88, Ser-90, Asp-121, and Thr-122. Asn-88–His-91 contacts ATP. Residues Arg-128 and Lys-211 each contribute to the ATP site. Mg(2+) is bound at residue Glu-277. Substrate-binding residues include Gly-300, Asp-301, and Thr-333. Asp-301 is a Mg(2+) binding site.

This sequence belongs to the pyruvate kinase family. In terms of assembly, homotetramer. The cofactor is Mg(2+). K(+) serves as cofactor.

The catalysed reaction is pyruvate + ATP = phosphoenolpyruvate + ADP + H(+). The protein operates within carbohydrate degradation; glycolysis; pyruvate from D-glyceraldehyde 3-phosphate: step 5/5. The protein is Pyruvate kinase (PYK) of Eimeria tenella (Coccidian parasite).